A 437-amino-acid polypeptide reads, in one-letter code: MANVIVIGAQWGDEGKGKITDLLSKSADVVVRYQGGVNAGHTVVVEGKIFKLHLIPSGILYPDTDCIIGSGTVIDPKVIIEELDQVEALGISTANLMISGAAHVTMPYHRMIDKASEKRRGSKKIGTTGRGIGPTYADKSERTGIRMIDLVNPDRLKEQINWTVNYKNVILEKLYDLSPLNPEEVVNEYLNFADRLRPHVIDASLKIYNAIQLKRNILFEGAQGTLLDLDHGTYPYVTSSNPVAGGACVGTGVGPTMIDRVIGVAKAYTTRVGEGPFPTEAKDEIGDLLCDRGAEFGTTTGRKRRCGWFDAVIGRYAVRINGMDCMAITKLDVLDGLEEIKVCVAYDMEGKRCEDFPGSAIQLSKCKPIYKTLPGWKESTVDCRNLEDLPKQALDYLRFLAELMNVPIAIVSLGASRHQTIVVEDPIHGPKRGLLYS.

Residues Gly-12–Lys-18 and Gly-40–Thr-42 contribute to the GTP site. Asp-13 serves as the catalytic Proton acceptor. The Mg(2+) site is built by Asp-13 and Gly-40. IMP-binding positions include Asp-13–Lys-16, Asn-38–His-41, Thr-128, Arg-142, Gln-223, Thr-238, and Arg-302. The active-site Proton donor is His-41. Thr-298 to Arg-304 lines the substrate pocket. GTP-binding positions include Arg-304, Lys-330–Asp-332, and Ser-412–Gly-414.

This sequence belongs to the adenylosuccinate synthetase family. As to quaternary structure, homodimer. It depends on Mg(2+) as a cofactor.

It is found in the cytoplasm. The enzyme catalyses IMP + L-aspartate + GTP = N(6)-(1,2-dicarboxyethyl)-AMP + GDP + phosphate + 2 H(+). It functions in the pathway purine metabolism; AMP biosynthesis via de novo pathway; AMP from IMP: step 1/2. In terms of biological role, plays an important role in the de novo pathway of purine nucleotide biosynthesis. Catalyzes the first committed step in the biosynthesis of AMP from IMP. The chain is Adenylosuccinate synthetase from Trichodesmium erythraeum (strain IMS101).